A 339-amino-acid polypeptide reads, in one-letter code: Putative pectinesterase 10 (339 aa).

The first 28 residues, 1–28 (MKGVTIHNFCYSYFKVCLLVMSLAYGSA), serve as a signal peptide directing secretion. A glycan (N-linked (GlcNAc...) asparagine) is linked at asparagine 112. Threonine 116 contacts substrate. The Proton donor role is filled by aspartate 169. The active-site Nucleophile is the aspartate 190. Substrate contacts are provided by arginine 252 and tryptophan 254. An N-linked (GlcNAc...) asparagine glycan is attached at asparagine 322.

The protein belongs to the pectinesterase family. Expressed in siliques.

The protein localises to the secreted. It localises to the cell wall. It carries out the reaction [(1-&gt;4)-alpha-D-galacturonosyl methyl ester](n) + n H2O = [(1-&gt;4)-alpha-D-galacturonosyl](n) + n methanol + n H(+). The protein operates within glycan metabolism; pectin degradation; 2-dehydro-3-deoxy-D-gluconate from pectin: step 1/5. Acts in the modification of cell walls via demethylesterification of cell wall pectin. The protein is Putative pectinesterase 10 (PME10) of Arabidopsis thaliana (Mouse-ear cress).